A 99-amino-acid polypeptide reads, in one-letter code: Protein dpy-30 homolog (99 aa).

The residue at position 1 (methionine 1) is an N-acetylmethionine. The disordered stretch occupies residues 1–26 (MESEQMLEGQTQVAENPHSEYGLTDS). A Phosphoserine modification is found at serine 19. At lysine 35 the chain carries N6-acetyllysine; alternate. Lysine 35 participates in a covalent cross-link: Glycyl lysine isopeptide (Lys-Gly) (interchain with G-Cter in SUMO2); alternate.

Belongs to the dpy-30 family. In terms of assembly, homodimer. Core component of several methyltransferase-containing complexes including MLL1/MLL, MLL2/3 (also named ASCOM complex) and MLL4/WBP7. Each complex is at least composed of ASH2L, RBBP5, WDR5, DPY30, one or more specific histone methyltransferases (KMT2A/MLL1, KMT2D/MLL2, KMT2C/MLL3 and KMT2B/MLL4), and the facultative components MEN1, HCFC1, HCFC2, NCOA6, KDM6A, PAXIP1/PTIP, PAGR1 and alpha- and beta-tubulin PAXIP1/PTIP, PAGR1 and alpha- and beta-tubulin. Interacts with ASH2L. The interaction with ASH2L is direct. Interacts with ARFGEF1. Component of the SET1 complex, at least composed of the catalytic subunit (SETD1A or SETD1B), WDR5, WDR82, RBBP5, ASH2L/ASH2, CXXC1/CFP1, HCFC1 and DPY30.

The protein resides in the nucleus. It is found in the golgi apparatus. Its subcellular location is the trans-Golgi network. In terms of biological role, as part of the MLL1/MLL complex, involved in the methylation of histone H3 at 'Lys-4', particularly trimethylation. Histone H3 'Lys-4' methylation represents a specific tag for epigenetic transcriptional activation. May play some role in histone H3 acetylation. In embryonic stem (ES) cells, plays a crucial role in the differentiation potential, particularly along the neural lineage, regulating gene induction and histone H3 'Lys-4' methylation at key developmental loci, including that mediated by retinoic acid. Does not affect ES cell self-renewal. May also play an indirect or direct role in endosomal transport. The chain is Protein dpy-30 homolog (Dpy30) from Mus musculus (Mouse).